The sequence spans 918 residues: Chaperone protein ClpC1, chloroplastic (918 aa).

A Clp R domain is found at 88-230 (FERFTEKAIK…RTQVIRMVGE (143 aa)). Repeat regions lie at residues 91 to 156 (FTEK…IGRG) and 166 to 230 (FTPR…MVGE). Residues 251–498 (LEEYGTNLTK…RVRLRHAQLP (248 aa)) are i. An ATP-binding site is contributed by 296-303 (GEPGVGKT). The 36-residue stretch at 505 to 540 (DKELRQVTKDKNEAVRGQDFEKAGELRDREMELKAQ) folds into the UVR domain. Residues 565–756 (VTEADIQHIV…LLIMTSNVGS (192 aa)) are II. 639-646 (GPTGVGKS) is an ATP binding site.

This sequence belongs to the ClpA/ClpB family. ClpC subfamily. As to expression, widely expressed.

The protein resides in the plastid. The protein localises to the chloroplast. Molecular chaperone that may interact with a ClpP-like protease involved in degradation of denatured proteins in the chloroplast. The polypeptide is Chaperone protein ClpC1, chloroplastic (CLPC1) (Oryza sativa subsp. japonica (Rice)).